A 385-amino-acid chain; its full sequence is tRNA pseudouridine synthase D (385 aa).

The active-site Nucleophile is D86. Positions G165–P305 constitute a TRUD domain.

This sequence belongs to the pseudouridine synthase TruD family.

It catalyses the reaction uridine(13) in tRNA = pseudouridine(13) in tRNA. Functionally, responsible for synthesis of pseudouridine from uracil-13 in transfer RNAs. This is tRNA pseudouridine synthase D from Helicobacter hepaticus (strain ATCC 51449 / 3B1).